Here is a 429-residue protein sequence, read N- to C-terminus: Ribosomal RNA small subunit methyltransferase B (429 aa).

S-adenosyl-L-methionine contacts are provided by residues 254–260, D277, D303, and D322; that span reads CAAPGGK. The active-site Nucleophile is the C375. The disordered stretch occupies residues 397–419; that stretch reads ALSETGTPDQPGQQNLPGGEEGD. Polar residues predominate over residues 400–412; that stretch reads ETGTPDQPGQQNL.

It belongs to the class I-like SAM-binding methyltransferase superfamily. RsmB/NOP family.

Its subcellular location is the cytoplasm. The enzyme catalyses cytidine(967) in 16S rRNA + S-adenosyl-L-methionine = 5-methylcytidine(967) in 16S rRNA + S-adenosyl-L-homocysteine + H(+). Specifically methylates the cytosine at position 967 (m5C967) of 16S rRNA. The chain is Ribosomal RNA small subunit methyltransferase B from Salmonella paratyphi A (strain ATCC 9150 / SARB42).